The sequence spans 149 residues: Transcriptional repressor NrdR (149 aa).

The segment at C3 to C34 is a zinc-finger region. The region spanning P49–E139 is the ATP-cone domain.

Belongs to the NrdR family. Zn(2+) is required as a cofactor.

Functionally, negatively regulates transcription of bacterial ribonucleotide reductase nrd genes and operons by binding to NrdR-boxes. This chain is Transcriptional repressor NrdR, found in Sodalis glossinidius (strain morsitans).